An 87-amino-acid chain; its full sequence is U3-theraphotoxin-Hhn1a 12 (87 aa).

The N-terminal stretch at 1-24 is a signal peptide; sequence MVNMKASMFLTFAGLVLLFVVCYA. Residues 25–52 constitute a propeptide that is removed on maturation; sequence SESEEKEFPKEMLSSIFAVDKDFKQEER. 3 disulfides stabilise this stretch: cysteine 54–cysteine 67, cysteine 61–cysteine 72, and cysteine 66–cysteine 79.

The protein belongs to the neurotoxin 10 (Hwtx-1) family. 51 (Hntx-8) subfamily. Hntx-8 sub-subfamily. Expressed by the venom gland.

The protein resides in the secreted. Its function is as follows. Ion channel inhibitor. In Cyriopagopus hainanus (Chinese bird spider), this protein is U3-theraphotoxin-Hhn1a 12.